The following is a 111-amino-acid chain: DNA-binding protein AF_2068 (111 aa).

Belongs to the PDCD5 family.

The chain is DNA-binding protein AF_2068 from Archaeoglobus fulgidus (strain ATCC 49558 / DSM 4304 / JCM 9628 / NBRC 100126 / VC-16).